Consider the following 437-residue polypeptide: 3-phosphoshikimate 1-carboxyvinyltransferase (437 aa).

3-phosphoshikimate-binding residues include Lys-26, Ser-27, and Arg-31. Lys-26 lines the phosphoenolpyruvate pocket. Gly-99 and Arg-127 together coordinate phosphoenolpyruvate. Ser-172, Gln-174, Asp-320, and Lys-347 together coordinate 3-phosphoshikimate. Gln-174 provides a ligand contact to phosphoenolpyruvate. Asp-320 serves as the catalytic Proton acceptor. Positions 351 and 392 each coordinate phosphoenolpyruvate.

The protein belongs to the EPSP synthase family. As to quaternary structure, monomer.

The protein resides in the cytoplasm. It carries out the reaction 3-phosphoshikimate + phosphoenolpyruvate = 5-O-(1-carboxyvinyl)-3-phosphoshikimate + phosphate. It functions in the pathway metabolic intermediate biosynthesis; chorismate biosynthesis; chorismate from D-erythrose 4-phosphate and phosphoenolpyruvate: step 6/7. In terms of biological role, catalyzes the transfer of the enolpyruvyl moiety of phosphoenolpyruvate (PEP) to the 5-hydroxyl of shikimate-3-phosphate (S3P) to produce enolpyruvyl shikimate-3-phosphate and inorganic phosphate. In Methylococcus capsulatus (strain ATCC 33009 / NCIMB 11132 / Bath), this protein is 3-phosphoshikimate 1-carboxyvinyltransferase.